The primary structure comprises 1444 residues: Cleavage and polyadenylation specificity factor subunit 1 (1444 aa).

4 disordered regions span residues 406–439, 549–571, 716–778, and 902–924; these read PPAS…SKSV, EETL…DDGR, GGVR…PAPF, and FREK…EGTG. The span at 413 to 422 shows a compositional bias: basic and acidic residues; sequence EAADKEEPPS. Ser757 and Ser767 each carry phosphoserine. Residues 759-776 are compositionally biased toward basic and acidic residues; the sequence is SKEEARRSSQPPADRDPA. The short motif at 894–909 is the Nuclear localization signal element; that stretch reads KKVPHNINFREKKPKP.

The protein belongs to the CPSF1 family. In terms of assembly, component of the cleavage and polyadenylation specificity factor (CPSF) complex, composed of CPSF1, CPSF2, CPSF3, CPSF4 and FIP1L1. Found in a complex with CPSF1, FIP1L1 and PAPOLA. Interacts with FIP1L1, TENT2/GLD2 and SRRM1. Interacts with TUT1; the interaction is direct and mediates the recruitment of the CPSF complex on the 3'UTR of selected pre-mRNAs. In terms of processing, the N-terminus is blocked.

The protein localises to the nucleus. It localises to the nucleoplasm. Its function is as follows. Component of the cleavage and polyadenylation specificity factor (CPSF) complex that plays a key role in pre-mRNA 3'-end formation, recognizing the AAUAAA signal sequence and interacting with poly(A) polymerase and other factors to bring about cleavage and poly(A) addition. This subunit is involved in the RNA recognition step of the polyadenylation reaction. May play a role in eye morphogenesis and the development of retinal ganglion cell projections to the midbrain. This Bos taurus (Bovine) protein is Cleavage and polyadenylation specificity factor subunit 1 (CPSF1).